Reading from the N-terminus, the 464-residue chain is Ribulose bisphosphate carboxylase/oxygenase activase A, chloroplastic (464 aa).

The N-terminal 48 residues, Met1–Ala48, are a transit peptide targeting the chloroplast. Gly155–Ser162 contributes to the ATP binding site.

It belongs to the RuBisCO activase family.

It is found in the plastid. It localises to the chloroplast stroma. In terms of biological role, activation of RuBisCO (ribulose-1,5-bisphosphate carboxylase/oxygenase; EC 4.1.1.39) involves the ATP-dependent carboxylation of the epsilon-amino group of lysine leading to a carbamate structure. In Hordeum vulgare (Barley), this protein is Ribulose bisphosphate carboxylase/oxygenase activase A, chloroplastic (RCAA).